Consider the following 122-residue polypeptide: Large ribosomal subunit protein bL12 (122 aa).

Belongs to the bacterial ribosomal protein bL12 family. Homodimer. Part of the ribosomal stalk of the 50S ribosomal subunit. Forms a multimeric L10(L12)X complex, where L10 forms an elongated spine to which 2 to 4 L12 dimers bind in a sequential fashion. Binds GTP-bound translation factors.

Forms part of the ribosomal stalk which helps the ribosome interact with GTP-bound translation factors. Is thus essential for accurate translation. This chain is Large ribosomal subunit protein bL12, found in Vibrio campbellii (strain ATCC BAA-1116).